The primary structure comprises 180 residues: ATP synthase subunit delta (180 aa).

The protein belongs to the ATPase delta chain family. In terms of assembly, F-type ATPases have 2 components, F(1) - the catalytic core - and F(0) - the membrane proton channel. F(1) has five subunits: alpha(3), beta(3), gamma(1), delta(1), epsilon(1). F(0) has three main subunits: a(1), b(2) and c(10-14). The alpha and beta chains form an alternating ring which encloses part of the gamma chain. F(1) is attached to F(0) by a central stalk formed by the gamma and epsilon chains, while a peripheral stalk is formed by the delta and b chains.

It is found in the cell inner membrane. Its function is as follows. F(1)F(0) ATP synthase produces ATP from ADP in the presence of a proton or sodium gradient. F-type ATPases consist of two structural domains, F(1) containing the extramembraneous catalytic core and F(0) containing the membrane proton channel, linked together by a central stalk and a peripheral stalk. During catalysis, ATP synthesis in the catalytic domain of F(1) is coupled via a rotary mechanism of the central stalk subunits to proton translocation. In terms of biological role, this protein is part of the stalk that links CF(0) to CF(1). It either transmits conformational changes from CF(0) to CF(1) or is implicated in proton conduction. This chain is ATP synthase subunit delta, found in Chlorobium phaeobacteroides (strain BS1).